Reading from the N-terminus, the 337-residue chain is Large ribosomal subunit protein uL3 (337 aa).

The tract at residues M1 to A20 is disordered.

Belongs to the universal ribosomal protein uL3 family. In terms of assembly, part of the 50S ribosomal subunit. Forms a cluster with proteins L14 and L24e.

Its function is as follows. One of the primary rRNA binding proteins, it binds directly near the 3'-end of the 23S rRNA, where it nucleates assembly of the 50S subunit. This Methanosarcina acetivorans (strain ATCC 35395 / DSM 2834 / JCM 12185 / C2A) protein is Large ribosomal subunit protein uL3.